We begin with the raw amino-acid sequence, 177 residues long: Eggshell protein (177 aa).

The first 18 residues, 1–18 (MKQSLTLVFLVAIGYATA), serve as a signal peptide directing secretion. Tandem repeats lie at residues 25–41 (YSGG…CDSG), 42–59 (YGDS…CGGG), 60–75 (YGGG…DCGN), 76–91 (YGGG…DCGN), and 92–112 (YGGG…CGGG). A 5 X approximate tandem repeats region spans residues 25-112 (YSGGYGGGCY…GCSGGNCGGG (88 aa)). Positions 149 to 166 (GSGKGKGGGKGGKGGKGG) are enriched in gly residues. Residues 149–177 (GSGKGKGGGKGGKGGKGGTYKPSHYGGGY) form a disordered region.

The sequence is that of Eggshell protein from Schistosoma mansoni (Blood fluke).